A 987-amino-acid chain; its full sequence is Valine--tRNA ligase (987 aa).

A 'HIGH' region motif is present at residues P45–H55. The 'KMSKS' region signature appears at K634–S638. ATP is bound at residue K637. The stretch at V917–E985 forms a coiled coil.

This sequence belongs to the class-I aminoacyl-tRNA synthetase family. ValS type 1 subfamily. In terms of assembly, monomer.

It is found in the cytoplasm. It carries out the reaction tRNA(Val) + L-valine + ATP = L-valyl-tRNA(Val) + AMP + diphosphate. Its function is as follows. Catalyzes the attachment of valine to tRNA(Val). As ValRS can inadvertently accommodate and process structurally similar amino acids such as threonine, to avoid such errors, it has a 'posttransfer' editing activity that hydrolyzes mischarged Thr-tRNA(Val) in a tRNA-dependent manner. In Cereibacter sphaeroides (strain ATCC 17029 / ATH 2.4.9) (Rhodobacter sphaeroides), this protein is Valine--tRNA ligase.